The sequence spans 1450 residues: DNA-directed RNA polymerase III subunit rpc1 (1450 aa).

Residues C67, C70, C77, H80, C107, C110, and C154 each coordinate Zn(2+). 3 residues coordinate Mg(2+): D491, D493, and D495. A bridging helix region spans residues P832–E844.

This sequence belongs to the RNA polymerase beta' chain family. Component of the RNA polymerase III (Pol III) complex consisting of 17 subunits.

The protein resides in the nucleus. It catalyses the reaction RNA(n) + a ribonucleoside 5'-triphosphate = RNA(n+1) + diphosphate. DNA-dependent RNA polymerase catalyzes the transcription of DNA into RNA using the four ribonucleoside triphosphates as substrates. Largest and catalytic core component of RNA polymerase III which synthesizes small RNAs, such as 5S rRNA and tRNAs. Forms the polymerase active center together with the second largest subunit. A single-stranded DNA template strand of the promoter is positioned within the central active site cleft of Pol III. A bridging helix emanates from RPC1 and crosses the cleft near the catalytic site and is thought to promote translocation of Pol III by acting as a ratchet that moves the RNA-DNA hybrid through the active site by switching from straight to bent conformations at each step of nucleotide addition. The protein is DNA-directed RNA polymerase III subunit rpc1 (polr3a) of Dictyostelium discoideum (Social amoeba).